Here is a 364-residue protein sequence, read N- to C-terminus: Mannose-1-phosphate guanyltransferase (364 aa).

The protein belongs to the transferase hexapeptide repeat family.

The protein resides in the cytoplasm. The enzyme catalyses alpha-D-mannose 1-phosphate + GTP + H(+) = GDP-alpha-D-mannose + diphosphate. It participates in nucleotide-sugar biosynthesis; GDP-alpha-D-mannose biosynthesis; GDP-alpha-D-mannose from alpha-D-mannose 1-phosphate (GTP route): step 1/1. Functionally, involved in cell wall synthesis where it is required for glycosylation. Involved in cell cycle progression through cell-size checkpoint. This chain is Mannose-1-phosphate guanyltransferase (mpg-1), found in Neurospora crassa (strain ATCC 24698 / 74-OR23-1A / CBS 708.71 / DSM 1257 / FGSC 987).